We begin with the raw amino-acid sequence, 197 residues long: uncharacterized protein (197 aa).

The chain crosses the membrane as a helical span at residues leucine 103–leucine 123.

It localises to the host membrane. This is an uncharacterized protein from Equus caballus (Horse).